The following is a 116-amino-acid chain: Large ribosomal subunit protein bL19 (116 aa).

It belongs to the bacterial ribosomal protein bL19 family.

This protein is located at the 30S-50S ribosomal subunit interface and may play a role in the structure and function of the aminoacyl-tRNA binding site. This Clostridium botulinum (strain Eklund 17B / Type B) protein is Large ribosomal subunit protein bL19.